A 251-amino-acid chain; its full sequence is Probable phosphatase Sama_2233 (251 aa).

Zn(2+) is bound by residues histidine 8, histidine 10, histidine 16, histidine 41, glutamate 74, histidine 102, histidine 132, aspartate 193, and histidine 195.

This sequence belongs to the PHP family. Zn(2+) serves as cofactor.

The polypeptide is Probable phosphatase Sama_2233 (Shewanella amazonensis (strain ATCC BAA-1098 / SB2B)).